Consider the following 258-residue polypeptide: Tryptophan synthase alpha chain (258 aa).

Active-site proton acceptor residues include Glu50 and Asp61.

Belongs to the TrpA family. As to quaternary structure, tetramer of two alpha and two beta chains.

It carries out the reaction (1S,2R)-1-C-(indol-3-yl)glycerol 3-phosphate + L-serine = D-glyceraldehyde 3-phosphate + L-tryptophan + H2O. It participates in amino-acid biosynthesis; L-tryptophan biosynthesis; L-tryptophan from chorismate: step 5/5. The alpha subunit is responsible for the aldol cleavage of indoleglycerol phosphate to indole and glyceraldehyde 3-phosphate. The protein is Tryptophan synthase alpha chain of Clostridium beijerinckii (strain ATCC 51743 / NCIMB 8052) (Clostridium acetobutylicum).